We begin with the raw amino-acid sequence, 481 residues long: uncharacterized protein (481 aa).

A compositionally biased stretch (basic residues) spans 1–18; sequence MSRLPSKTKYHSSHRSLN. The interval 1 to 37 is disordered; that stretch reads MSRLPSKTKYHSSHRSLNRKTPLLQRSSETNSLRESG. Residues 24–34 show a composition bias toward polar residues; the sequence is LQRSSETNSLR. Transmembrane regions (helical) follow at residues 172–191 and 195–214; these read SIST…AGAI and AAAG…YLCW.

Its subcellular location is the membrane. This is an uncharacterized protein from Coxiella burnetii (strain RSA 493 / Nine Mile phase I).